Here is a 434-residue protein sequence, read N- to C-terminus: Mitochondrial distribution and morphology protein 10 (434 aa).

It belongs to the MDM10 family. Component of the ER-mitochondria encounter structure (ERMES) or MDM complex, composed of mmm1, mdm10, mdm12 and mdm34. Associates with the mitochondrial outer membrane sorting assembly machinery SAM(core) complex.

Its subcellular location is the mitochondrion outer membrane. In terms of biological role, component of the ERMES/MDM complex, which serves as a molecular tether to connect the endoplasmic reticulum and mitochondria. Components of this complex are involved in the control of mitochondrial shape and protein biogenesis and may function in phospholipid exchange. mdm10 is involved in the late assembly steps of the general translocase of the mitochondrial outer membrane (TOM complex). Functions in the tom40-specific route of the assembly of outer membrane beta-barrel proteins, including the association of tom40 with the receptor tom22 and small TOM proteins. Can associate with the SAM(core) complex as well as the mdm12-mmm1 complex, both involved in late steps of the major beta-barrel assembly pathway, that is responsible for biogenesis of all outer membrane beta-barrel proteins. May act as a switch that shuttles between both complexes and channels precursor proteins into the tom40-specific pathway. Plays a role in mitochondrial morphology and in the inheritance of mitochondria. In Aspergillus niger (strain ATCC MYA-4892 / CBS 513.88 / FGSC A1513), this protein is Mitochondrial distribution and morphology protein 10 (mdmB).